The sequence spans 1252 residues: Guanine nucleotide exchange factor SDC25 (1252 aa).

Positions 26 to 97 (QPIDVVECTY…PPSFTRSILN (72 aa)) constitute an SH3 domain. 2 disordered regions span residues 409 to 454 (IPAS…DTIW) and 623 to 648 (LNLDNAKDKKNGSQNTDIQEEEDEYE). Residues 416–428 (TSCSSETSHHSPS) are compositionally biased toward low complexity. The N-terminal Ras-GEF domain maps to 782 to 914 (SNNRIKGGSK…LLKEVNQKFK (133 aa)). The 248-residue stretch at 952-1199 (DPVLFATQLT…YQLSLIIEPK (248 aa)) folds into the Ras-GEF domain. A disordered region spans residues 1201 to 1252 (RKKVVPNSNSNNKSQEKSRDDQTDEGKTSTKKDRFSKFQLHKTKKKAPKVSK). A compositionally biased stretch (basic and acidic residues) spans 1214–1236 (SQEKSRDDQTDEGKTSTKKDRFS). Positions 1239-1252 (QLHKTKKKAPKVSK) are enriched in basic residues.

In terms of biological role, promotes the exchange of Ras-bound GDP by GTP. In Saccharomyces cerevisiae (strain YJM789) (Baker's yeast), this protein is Guanine nucleotide exchange factor SDC25 (SDC25).